A 287-amino-acid polypeptide reads, in one-letter code: 1-acyl-sn-glycerol-3-phosphate acyltransferase alpha (287 aa).

Residues 1–26 form the signal peptide; it reads MELWPGAGTLLLLLFLLLLLLLPTLW. Residues 27-37 are Lumenal-facing; the sequence is FCSPSAKYFFK. Residues 38–58 form a helical membrane-spanning segment; that stretch reads MAFYNGWILFLAVLAIPVCAV. The Cytoplasmic portion of the chain corresponds to 59 to 127; it reads RGRNVENMKI…PGHCVPIAKR (69 aa). Positions 104-109 match the HXXXXD motif motif; sequence HQSSLD. Residues 128–148 form a helical membrane-spanning segment; it reads ELLWAGSAGLACWLAGVIFID. The Lumenal segment spans residues 149-192; it reads RKRTGDAISVMSEVAQTLLTQDVRVWVFPEGTRNHNGSMLPFKR. The EGTR motif signature appears at 178 to 181; sequence EGTR.

The protein belongs to the 1-acyl-sn-glycerol-3-phosphate acyltransferase family.

It is found in the endoplasmic reticulum membrane. The catalysed reaction is a 1-acyl-sn-glycero-3-phosphate + an acyl-CoA = a 1,2-diacyl-sn-glycero-3-phosphate + CoA. It catalyses the reaction 1-(9Z-octadecenoyl)-sn-glycero-3-phosphate + (9Z)-octadecenoyl-CoA = 1,2-di-(9Z-octadecenoyl)-sn-glycero-3-phosphate + CoA. The enzyme catalyses 1-(9Z-octadecenoyl)-sn-glycero-3-phosphate + hexadecanoyl-CoA = 1-(9Z)-octadecenoyl-2-hexadecanoyl-sn-glycero-3-phosphate + CoA. It carries out the reaction heptadecanoyl-CoA + 1-(9Z-octadecenoyl)-sn-glycero-3-phosphate = 1-(9Z)-octadecenoyl-2-heptadecanoyl-sn-glycero-3-phosphate + CoA. The catalysed reaction is 1-(9Z-octadecenoyl)-sn-glycero-3-phosphate + octadecanoyl-CoA = 1-(9Z-octadecenoyl)-2-octadecanoyl-sn-glycero-3-phosphate + CoA. It catalyses the reaction 1-(9Z-octadecenoyl)-sn-glycero-3-phosphate + (9Z,12Z)-octadecadienoyl-CoA = 1-(9Z)-octadecenoyl-2-(9Z,12Z)-octadecadienoyl-sn-glycero-3-phosphate + CoA. The enzyme catalyses 1-(9Z-octadecenoyl)-sn-glycero-3-phosphate + tetradecanoyl-CoA = 1-(9Z)-octadecenoyl-2-tetradecanoyl-sn-glycero-3-phosphate + CoA. It carries out the reaction pentadecanoyl-CoA + 1-(9Z-octadecenoyl)-sn-glycero-3-phosphate = 1-(9Z)-octadecenoyl-2-pentadecanoyl-sn-glycero-3-phosphate + CoA. The catalysed reaction is 1-hexadecanoyl-sn-glycero-3-phosphate + (9Z)-octadecenoyl-CoA = 1-hexadecanoyl-2-(9Z-octadecenoyl)-sn-glycero-3-phosphate + CoA. It catalyses the reaction 1-(9Z,12Z,15Z)-octadecatrienoyl-sn-glycero-3-phosphate + (9Z)-octadecenoyl-CoA = 1-(9Z,12Z,15Z)-octadecatrienoyl-2-(9Z)-octadecenoyl-sn-glycero-3-phosphate + CoA. The enzyme catalyses 1-(6Z,9Z,12Z-octadecatrienoyl)-sn-glycero-3-phosphate + (9Z)-octadecenoyl-CoA = (6Z,9Z,12Z)-octadecatrienoyl-2-(9Z)-octadecenoyl-sn-glycero-3-phosphate + CoA. It carries out the reaction 1-eicosanoyl-sn-glycero-3-phosphate + (9Z)-octadecenoyl-CoA = 1-eicosanoyl-2-(9Z)-octadecenoyl-sn-glycero-3-phosphate + CoA. The catalysed reaction is 1-tetradecanoyl-sn-glycerol 3-phosphate + (9Z)-octadecenoyl-CoA = 1-tetradecanoyl-2-(9Z)-octadecenoyl-sn-glycero-3-phosphate + CoA. It catalyses the reaction 1-(9Z-octadecenoyl)-sn-glycero-3-phosphate + (5Z,8Z,11Z,14Z)-eicosatetraenoyl-CoA = 1-(9Z)-octadecenoyl-2-(5Z,8Z,11Z,14Z)-eicosatetraenoyl-sn-glycero-3-phosphate + CoA. The enzyme catalyses 1-(9Z-octadecenoyl)-sn-glycero-3-phosphate + dodecanoyl-CoA = 1-(9Z)-octadecenoyl-2-dodecanoyl-sn-glycero-3-phosphate + CoA. It carries out the reaction (6Z)-octadecenoyl-CoA + 1-(9Z-octadecenoyl)-sn-glycero-3-phosphate = 1-(9Z)-octadecenoyl-2-(6Z)-octadecenoyl-sn-glycero-3-phosphate + CoA. The catalysed reaction is (11Z)-octadecenoyl-CoA + 1-(9Z-octadecenoyl)-sn-glycero-3-phosphate = 1-(9Z)-octadecenoyl-2-(11Z)-octadecenoyl-sn-glycero-3-phosphate + CoA. It catalyses the reaction (9Z)-hexadecenoyl-CoA + 1-(9Z-octadecenoyl)-sn-glycero-3-phosphate = 1-(9Z-octadecenoyl)-2-(9Z-hexadecenoyl)-sn-glycero-3-phosphate + CoA. It participates in phospholipid metabolism; CDP-diacylglycerol biosynthesis; CDP-diacylglycerol from sn-glycerol 3-phosphate: step 2/3. In terms of biological role, converts 1-acyl-sn-glycerol-3-phosphate (lysophosphatidic acid or LPA) into 1,2-diacyl-sn-glycerol-3-phosphate (phosphatidic acid or PA) by incorporating an acyl moiety at the sn-2 position of the glycerol backbone. The polypeptide is 1-acyl-sn-glycerol-3-phosphate acyltransferase alpha (AGPAT1) (Ovis aries (Sheep)).